We begin with the raw amino-acid sequence, 369 residues long: RNA-binding protein rnp24 (369 aa).

3 disordered regions span residues 1 to 77, 200 to 219, and 304 to 369; these read MEPI…KKKE, TDFSGRPSKPANTLSKTASI, and RMRN…IKFD. An RRM 1 domain is found at 105-206; the sequence is WGIWVGNLSF…KSNTDFSGRP (102 aa). Polar residues predominate over residues 209 to 219; the sequence is PANTLSKTASI. The RRM 2 domain occupies 228 to 310; the sequence is SILFVGNLDF…RSKRMRNKSP (83 aa). Positions 325–341 are enriched in basic and acidic residues; that stretch reads QEDKPNFKRARKIDPRS. Low complexity predominate over residues 346–357; that stretch reads AALAKAQRSSAA.

It localises to the nucleus. The protein is RNA-binding protein rnp24 (rnp24) of Schizosaccharomyces pombe (strain 972 / ATCC 24843) (Fission yeast).